Here is a 367-residue protein sequence, read N- to C-terminus: Heme A synthase (367 aa).

A run of 5 helical transmembrane segments spans residues 26-46, 111-131, 139-159, 174-194, and 212-232; these read IRGW…VGGA, LLAR…WVTG, LPLL…WWMV, LATH…IYRG, and AGAI…VAGL. His-274 provides a ligand contact to heme. The next 3 membrane-spanning stretches (helical) occupy residues 276-296, 305-325, and 327-347; these read LGAY…LRAA, SVLL…TLLL, and VPIG…GFAI. His-335 lines the heme pocket.

Belongs to the COX15/CtaA family. Type 2 subfamily. In terms of assembly, interacts with CtaB. It depends on heme b as a cofactor.

The protein localises to the cell membrane. The enzyme catalyses Fe(II)-heme o + 2 A + H2O = Fe(II)-heme a + 2 AH2. It participates in porphyrin-containing compound metabolism; heme A biosynthesis; heme A from heme O: step 1/1. In terms of biological role, catalyzes the conversion of heme O to heme A by two successive hydroxylations of the methyl group at C8. The first hydroxylation forms heme I, the second hydroxylation results in an unstable dihydroxymethyl group, which spontaneously dehydrates, resulting in the formyl group of heme A. The sequence is that of Heme A synthase from Rhizobium meliloti (strain 1021) (Ensifer meliloti).